Reading from the N-terminus, the 366-residue chain is Patr class I histocompatibility antigen, C alpha chain (366 aa).

The signal sequence occupies residues 1–24 (MRVTAPRTLLLLLSGGLALTETWA). Residues 25-114 (GSHSLRYFDT…LRGYYNQSED (90 aa)) form an alpha-1 region. The Extracellular portion of the chain corresponds to 25 to 308 (GSHSLRYFDT…KPTSQPTIPI (284 aa)). The N-linked (GlcNAc...) asparagine glycan is linked to asparagine 110. Residues 115–206 (GSHTLQWMYG…ENGKETLQRT (92 aa)) form an alpha-2 region. Intrachain disulfides connect cysteine 125-cysteine 192 and cysteine 227-cysteine 283. The tract at residues 207–298 (ECPKTHMTHH…GLPEPLTLRW (92 aa)) is alpha-3. The region spanning 209–297 (PKTHMTHHPV…EGLPEPLTLR (89 aa)) is the Ig-like C1-type domain. The segment at 299–308 (KPTSQPTIPI) is connecting peptide. A helical transmembrane segment spans residues 309–332 (VGIVAGLAVLAVLAVLGAVVTAMM). Topologically, residues 333 to 366 (CRRKSSGGKGGSCSQAACSNSAQGSDESLIACKA) are cytoplasmic. Phosphoserine occurs at positions 357 and 360.

Belongs to the MHC class I family. In terms of assembly, heterodimer of an alpha chain and a beta chain (beta-2-microglobulin).

It localises to the membrane. Functionally, involved in the presentation of foreign antigens to the immune system. The sequence is that of Patr class I histocompatibility antigen, C alpha chain from Pan troglodytes (Chimpanzee).